A 379-amino-acid polypeptide reads, in one-letter code: Nematocin receptor 1 (379 aa).

Residues 19–48 (HNLYLFQMLELQENITDSQPMDPPSLEIMM) lie on the Extracellular side of the membrane. Asn32 is a glycosylation site (N-linked (GlcNAc...) asparagine). Residues 49–69 (LHHLMIILVTLFGNTLLIYVI) traverse the membrane as a helical segment. The Cytoplasmic portion of the chain corresponds to 70–95 (YKNNAVLRRKRVTPVQMLMLHMCAAD). Residues 96–116 (ILFALISVGPTMAITATVPFF) form a helical membrane-spanning segment. The Extracellular segment spans residues 117–124 (YGPNLLCK). A disulfide bridge connects residues Cys123 and Cys196. Residues 125–145 (LTKFLQVIPMYASSFLLVAIS) traverse the membrane as a helical segment. The Cytoplasmic portion of the chain corresponds to 146 to 168 (ADRYQAICRPLASMKSSIYNRPA). The chain crosses the membrane as a helical span at residues 169-189 (LYSGIAWTAAILFSTPQLYLF). Residues 190-207 (EKRNGDCSENYTTALQYQ) lie on the Extracellular side of the membrane. Residue Asn199 is glycosylated (N-linked (GlcNAc...) asparagine). The helical transmembrane segment at 208–228 (LYVCLFNSVVWLLPSAIAGWL) threads the bilayer. The Cytoplasmic portion of the chain corresponds to 229–289 (YLCVCKAVWK…DRRRVQTVKL (61 aa)). Residues 290 to 310 (TLTIVAANFVLWAPFCITSVI) traverse the membrane as a helical segment. Residues 311-320 (DAVWPTAINS) are Extracellular-facing. Asn319 carries an N-linked (GlcNAc...) asparagine glycan. Residues 321–343 (TFATYIMFFGNLNSCMNPWLWFH) traverse the membrane as a helical segment. Residues 344–379 (FNRKQLKRACPCRKSSEPLIQSLVYVHVMTSEQSDF) are Cytoplasmic-facing.

The protein belongs to the G-protein coupled receptor 1 family. Vasopressin/oxytocin receptor subfamily. As to expression, detected in the left ASE gustatory neuron, the chemosensory neuron pairs ASH and ADF, and the PQR tail neuron. In males, detected in hook and tail sensory neurons involved in vulval sensing and hermaphrodite contact, and in spicule protractor muscles.

The protein localises to the cell membrane. Its function is as follows. Receptor for nematocin. The activity of this receptor is mediated by G proteins which activate a phosphatidylinositol-calcium second messenger system. The activity of this receptor may be modulated by ntr-2, leading to reduced intracellular cAMP production. Plays a role in gustatory associative learning. Also plays a role in male mating behavior. The polypeptide is Nematocin receptor 1 (Caenorhabditis elegans).